We begin with the raw amino-acid sequence, 529 residues long: Basal body-orientation factor 1 (529 aa).

Residues 1–13 (MPSKGKDKKKGKS) are compositionally biased toward basic residues. A disordered region spans residues 1–22 (MPSKGKDKKKGKSKGKDTKKLI). 2 coiled-coil regions span residues 85–201 (LKKQ…EAEK) and 271–361 (VKEK…EVER).

This sequence belongs to the BBOF1 family. As to quaternary structure, interacts with MNS1 and ODF2.

The protein resides in the cytoplasm. The protein localises to the cytoskeleton. It localises to the cilium basal body. Its subcellular location is the flagellum axoneme. Plays an essential role in sperm motility and male fertility by stabilizing the sperm flagellar axonemal structure. May be required for the stability of ODF2 and MANS1 proteins. Dispensable for the assembly and function of motile cilia. The polypeptide is Basal body-orientation factor 1 (Homo sapiens (Human)).